The primary structure comprises 701 residues: MTASHSDSLVVLFGATAGAYGAKLGSDERELILLVWQVVDLPSKKVGTLHKSLVKADNLELSDQCREVSGLTAEGLGKAEPLDRVLQQFIQLVSSDLKVFGRNSYTLCSDGQLLIRQVLHPETSKKNFLLSDCFYSFYDLRKEFHTCYPSSAAVKDQTIKTMAEYLGLGTDEAEEDFGVWQVKTMVAIIFSMLSENCDHIFTDPETVKYKYETGPCSKSETVDSETVIRARGLPWQSSDQDIARFFKGLNIAKGGVALCLNAQGRRNGEALVRFVNSEQRDLALERHKHHMGSRYIEVYKATGEEFLKIAGGTSNEVAQFLSKENQVIIRMRGLPFTATQEDVLGFLGPECPVTGGKEGLLFVKYPDGRPTGDAFVLFSCEEYAQNALKKHKEILGKRYIELFRSTAAEVQQVLNRYMSTPLIPTLPTPIIPVIPPPYTIATGSIRDCVRLRGLPYTAGIDDILDFMGDATADIKPHGVHMVLNQQGRPSGDAFIQMKSADKAFMVAQKCHKKMMKDRYVEVFQCSGEEMNFVLMGGTLNRSGLSPPPCLSPPAYAAFQTAAVIPAEAALYQPQALLPTARTPQASAAAPPAVTYYPAQAAQLYMNYTAYYPSPPVSPTTVGYLAAPPGAVAAAATATHTPLLPQPGALVRMQGLPYNTGMKEILSFFQGYQYAPDDYNGLIQLSEQARSVLQAPKEWVCL.

RRM domains follow at residues threonine 226–glycine 303, valine 327–alanine 407, and cysteine 448–phenylalanine 523.

It belongs to the ESRP family.

It localises to the nucleus. MRNA splicing factor that regulates the formation of epithelial cell-specific isoforms. Specifically regulates the expression of FGFR2-IIIb, an epithelial cell-specific isoform of FGFR2. Acts by directly binding specific sequences in mRNAs. Binds the GU-rich sequence motifs in the ISE/ISS-3, a cis-element regulatory region present in the mRNA of FGFR2. The polypeptide is Epithelial splicing regulatory protein 2 (ESRP2) (Gallus gallus (Chicken)).